A 388-amino-acid polypeptide reads, in one-letter code: Mannitol-1-phosphate 5-dehydrogenase (388 aa).

Residue 4-15 participates in NAD(+) binding; the sequence is AVHFGAGNIGRG.

Belongs to the mannitol dehydrogenase family.

It catalyses the reaction D-mannitol 1-phosphate + NAD(+) = beta-D-fructose 6-phosphate + NADH + H(+). This chain is Mannitol-1-phosphate 5-dehydrogenase, found in Lactococcus lactis subsp. cremoris (strain SK11).